We begin with the raw amino-acid sequence, 154 residues long: Aspartate carbamoyltransferase regulatory chain (154 aa).

Residues Cys-109, Cys-114, Cys-138, and Cys-141 each coordinate Zn(2+).

This sequence belongs to the PyrI family. In terms of assembly, contains catalytic and regulatory chains. Requires Zn(2+) as cofactor.

Its function is as follows. Involved in allosteric regulation of aspartate carbamoyltransferase. The protein is Aspartate carbamoyltransferase regulatory chain of Yersinia enterocolitica serotype O:8 / biotype 1B (strain NCTC 13174 / 8081).